The sequence spans 325 residues: Protease HtpX homolog (325 aa).

A helical membrane pass occupies residues 20 to 40 (IGYLLGGGGGMMIALVIAVAM). His130 contacts Zn(2+). Glu131 is a catalytic residue. His134 contributes to the Zn(2+) binding site. Transmembrane regions (helical) follow at residues 145-165 (IVAT…FLGG) and 173-193 (VMGV…AMIV). Glu202 contributes to the Zn(2+) binding site. A disordered region spans residues 288–325 (AMTARAAAPSQNSGPWGQRSDNAGGNSNGGSRYRGPWS). The segment covering 306–325 (RSDNAGGNSNGGSRYRGPWS) has biased composition (low complexity).

Belongs to the peptidase M48B family. The cofactor is Zn(2+).

It localises to the cell inner membrane. The sequence is that of Protease HtpX homolog from Brucella abortus (strain S19).